A 1022-amino-acid chain; its full sequence is GPI ethanolamine phosphate transferase 1 (1022 aa).

Residues 1–6 are Cytoplasmic-facing; it reads MARVGR. The helical transmembrane segment at 7-27 threads the bilayer; sequence VGFLTLAVVFHLMYAYSIFDI. Residues 28–466 lie on the Lumenal side of the membrane; sequence YFVSPIVSGM…LQTYDWLFLR (439 aa). N-linked (GlcNAc...) asparagine glycans are attached at residues N148 and N433. The chain crosses the membrane as a helical span at residues 467–487; the sequence is TIVSLGYLGWIAYALTTVIDL. The Cytoplasmic portion of the chain corresponds to 488–498; the sequence is HVLHGKSESNR. A helical transmembrane segment spans residues 499-519; the sequence is TTFSIMFFSSILVALFSVLLY. Over 520–560 the chain is Lumenal; sequence QGSSWRYYLYALFPIFFWEEVFARRKALLAGREILLGHVHS. The chain crosses the membrane as a helical span at residues 561–581; the sequence is VSGYFAFAIQLLLYVGVLEAL. Topologically, residues 582–589 are cytoplasmic; it reads VQSYFHRD. The helical transmembrane segment at 590 to 610 threads the bilayer; the sequence is IFTVCFILGGFWPITYGTKFL. Over 611–614 the chain is Lumenal; sequence GQHK. The helical transmembrane segment at 615–635 threads the bilayer; sequence LLSASWALGCFLMSIFTLLPA. Over 636–640 the chain is Cytoplasmic; it reads NKVED. The chain crosses the membrane as a helical span at residues 641–661; it reads MMMISCGSLLMFLTGLLYLIF. Residues 662–685 lie on the Lumenal side of the membrane; that stretch reads ERSILGQKRSSDPNSVVSSCGSRT. Residues 686–706 traverse the membrane as a helical segment; sequence IMGAQVGMILLALIVTRSSVA. The Cytoplasmic portion of the chain corresponds to 707–713; sequence SLQAKQG. Residues 714 to 734 form a helical membrane-spanning segment; the sequence is LPLGNQVLGWAILVSSLLLPF. At 735–749 the chain is on the lumenal side; the sequence is LHRLYPNSHYLHRLM. 2 helical membrane-spanning segments follow: residues 750–770 and 771–791; these read VIFL…EGLF and YFVF…IYIH. Topologically, residues 792–837 are lumenal; the sequence is TTAPTREQDHSVANGSLPAKKPSPGNTVVVEGQPYRYRTLSVSDAR. N805 carries N-linked (GlcNAc...) asparagine glycosylation. The chain crosses the membrane as a helical span at residues 838-858; the sequence is VALFFFFLLQSGFFSTGNIAS. Topologically, residues 859–880 are cytoplasmic; sequence VSSFSLDSVYRLIPIFNPFAQG. A helical membrane pass occupies residues 881–901; it reads ALLILKLLIPFAIISANLGIL. The Lumenal segment spans residues 902 to 910; sequence NHRLEVAPS. The chain crosses the membrane as a helical span at residues 911–931; it reads ALFMVVMSISDVMTLNFFYMV. Topologically, residues 932–947 are cytoplasmic; the sequence is RDEGSWLEIGTTISHF. The chain crosses the membrane as a helical span at residues 948–968; it reads CIASFLCTFVAVLEFLSELFI. The Lumenal portion of the chain corresponds to 969–1022; it reads SGVDFGHPATTVGSAVAKAVNGSVACGHSPDSDISGEDSTSVGITAKADPDARS. N989 carries an N-linked (GlcNAc...) asparagine glycan. A disordered region spans residues 998-1022; sequence PDSDISGEDSTSVGITAKADPDARS.

It belongs to the PIGG/PIGN/PIGO family. PIGN subfamily.

The protein resides in the endoplasmic reticulum membrane. It participates in glycolipid biosynthesis; glycosylphosphatidylinositol-anchor biosynthesis. In terms of biological role, ethanolamine phosphate transferase involved in glycosylphosphatidylinositol-anchor biosynthesis. Transfers ethanolamine phosphate to the first alpha-1,4-linked mannose of the glycosylphosphatidylinositol precursor of GPI-anchor. In Aspergillus oryzae (strain ATCC 42149 / RIB 40) (Yellow koji mold), this protein is GPI ethanolamine phosphate transferase 1 (mcd4).